Consider the following 510-residue polypeptide: Nectin-4 (510 aa).

An N-terminal signal peptide occupies residues 1-31 (MPLSLGAEMWGPAAWLLLLLLLASFTGQRLA). Residues 32–144 (GELETSDLVT…GSFQARLRLR (113 aa)) enclose the Ig-like V-type domain. At 32-349 (GELETSDLVT…GKQVDLVSAS (318 aa)) the chain is on the extracellular side. Disulfide bonds link Cys52–Cys127, Cys171–Cys223, and Cys270–Cys315. Ig-like C2-type domains follow at residues 148–237 (PPLP…QRIT) and 248–331 (ASVR…VVVD). An N-linked (GlcNAc...) asparagine glycan is attached at Asn281. Residues 350 to 370 (VVVVGVIAALLFCLLVVVVVL) form a helical membrane-spanning segment. Residues 371-510 (MSRYHRRKAQ…IYINGRGHLV (140 aa)) are Cytoplasmic-facing. The segment covering 400-412 (RLHSHHSDPRNQP) has biased composition (basic and acidic residues). The disordered stretch occupies residues 400-475 (RLHSHHSDPR…GRAEEEEDRD (76 aa)).

Belongs to the nectin family. Self-associates. Interacts via its Ig-like V-type domain with NECTIN1 Ig-like V-type domain. Interacts via its C-terminus with AFDN. Interacts with TIGIT.

It localises to the cell membrane. The protein localises to the cell junction. Its subcellular location is the adherens junction. Its function is as follows. Seems to be involved in cell adhesion through trans-homophilic and -heterophilic interactions, the latter including specifically interactions with NECTIN1. Plays a role in the senescence-associated cell size enlargement via SFK/PI3K/Rac1 and thus promotes senescent cell survival. Also participates in the innate immune response by acting as a ligand for the receptor TIGIT to inhibit NK-cell activity. This is Nectin-4 from Bos taurus (Bovine).